The sequence spans 398 residues: G2/mitotic-specific cyclin-B2 (398 aa).

Disordered regions lie at residues 1–26 (MALL…KPKS) and 53–76 (AQNT…KPTA). The residue at position 8 (Thr-8) is a Phosphothreonine. The span at 8–23 (TVSTDLENNDTGVNSK) shows a compositional bias: polar residues. Positions 55-69 (NTKVPVPPTKTTNVN) are enriched in low complexity. Phosphoserine occurs at positions 77 and 92. Residue Thr-94 is modified to Phosphothreonine. Ser-99, Ser-392, and Ser-398 each carry phosphoserine.

The protein belongs to the cyclin family. Cyclin AB subfamily. In terms of assembly, interacts with the CDK1 protein kinase to form a serine/threonine kinase holoenzyme complex also known as maturation promoting factor (MPF). The cyclin subunit imparts substrate specificity to the complex.

Functionally, essential for the control of the cell cycle at the G2/M (mitosis) transition. This Bos taurus (Bovine) protein is G2/mitotic-specific cyclin-B2 (CCNB2).